We begin with the raw amino-acid sequence, 281 residues long: Putative outer membrane protein BBA52 (281 aa).

The segment at 162–281 is disordered; the sequence is KRISDNQSKL…FFDSLEDQFI (120 aa). Residues 179–196 show a composition bias toward polar residues; the sequence is NKSVGSKFSKNSRPSKSP. The span at 219 to 249 shows a compositional bias: acidic residues; it reads EFLDDPSQESDELEREYQDDELESEDPDDGE. Basic and acidic residues predominate over residues 250-262; that stretch reads REYQDDRESRDDT. Over residues 263-281 the composition is skewed to acidic residues; it reads FNEDQSEDEFFDSLEDQFI.

It is found in the cell outer membrane. This chain is Putative outer membrane protein BBA52, found in Borreliella burgdorferi (strain ATCC 35210 / DSM 4680 / CIP 102532 / B31) (Borrelia burgdorferi).